The primary structure comprises 251 residues: Probable aquaporin TIP4-1 (251 aa).

Transmembrane regions (helical) follow at residues 26–46 and 57–77; these read LVLTFVFVFTGVAATMAAGVP and ALAGVAIATALAAGVLVTAGF. The NPA 1 motif lies at 85–87; sequence NPA. 3 helical membrane passes run 104–124, 144–164, and 170–190; these read ALYVAAQLLASSLACILLRYL, GLVMEIILTFSLLFVVYATIL, and VPGFGPLLTGLIVGANTIAGG. An NPA 2 motif is present at residues 198–200; it reads NPA. The helical transmembrane segment at 219–239 threads the bilayer; sequence WLGPLIGGPLAGLVYESLFLV.

It belongs to the MIP/aquaporin (TC 1.A.8) family. TIP (TC 1.A.8.10) subfamily. Expressed in roots, leaves and anthers.

Its subcellular location is the vacuole membrane. Its function is as follows. Aquaporins facilitate the transport of water and small neutral solutes across cell membranes. May be involved in transport from the vacuolar compartment to the cytoplasm. The sequence is that of Probable aquaporin TIP4-1 (TIP4-1) from Oryza sativa subsp. japonica (Rice).